The chain runs to 1128 residues: Major DNA-binding protein (1128 aa).

The tract at residues 1104-1128 (LGGGGQGSGGRRKRRLATVLPGLEV) is required for nuclear localization.

Belongs to the herpesviridae major DNA-binding protein family. Homooligomers. Forms double-helical filaments necessary for the formation of replication compartments within the host nucleus. Interacts with the origin-binding protein. Interacts with the helicase primase complex; this interaction stimulates primer synthesis activity of the helicase-primase complex. Interacts with the DNA polymerase. Interacts with the alkaline exonuclease; this interaction increases its nuclease processivity.

The protein localises to the virion tegument. It is found in the host nucleus. In terms of biological role, plays several crucial roles in viral infection. Participates in the opening of the viral DNA origin to initiate replication by interacting with the origin-binding protein. May disrupt loops, hairpins and other secondary structures present on ssDNA to reduce and eliminate pausing of viral DNA polymerase at specific sites during elongation. Promotes viral DNA recombination by performing strand-transfer, characterized by the ability to transfer a DNA strand from a linear duplex to a complementary single-stranded DNA circle. Can also catalyze the renaturation of complementary single strands. Additionally, reorganizes the host cell nucleus, leading to the formation of prereplicative sites and replication compartments. This process is driven by the protein which can form double-helical filaments in the absence of DNA. This is Major DNA-binding protein from Homo sapiens (Human).